Here is a 138-residue protein sequence, read N- to C-terminus: Nucleoside diphosphate kinase (138 aa).

ATP is bound by residues K12, Y60, R88, T94, R105, and N115. Residue H118 is the Pros-phosphohistidine intermediate of the active site.

It belongs to the NDK family. Homotetramer. It depends on Mg(2+) as a cofactor.

The protein localises to the cytoplasm. The enzyme catalyses a 2'-deoxyribonucleoside 5'-diphosphate + ATP = a 2'-deoxyribonucleoside 5'-triphosphate + ADP. The catalysed reaction is a ribonucleoside 5'-diphosphate + ATP = a ribonucleoside 5'-triphosphate + ADP. Functionally, major role in the synthesis of nucleoside triphosphates other than ATP. The ATP gamma phosphate is transferred to the NDP beta phosphate via a ping-pong mechanism, using a phosphorylated active-site intermediate. In Cutibacterium acnes (strain DSM 16379 / KPA171202) (Propionibacterium acnes), this protein is Nucleoside diphosphate kinase.